The sequence spans 170 residues: Archaemetzincin (170 aa).

His110 is a binding site for Zn(2+). The active-site Proton acceptor is Glu111. 6 residues coordinate Zn(2+): His114, His120, Cys121, Cys125, Cys144, and Cys147.

This sequence belongs to the peptidase M54 family. In terms of assembly, monomer. The cofactor is Zn(2+).

Probable zinc metalloprotease whose natural substrate is unknown. This chain is Archaemetzincin, found in Nanoarchaeum equitans (strain Kin4-M).